A 202-amino-acid chain; its full sequence is U-Kazal-Dg21.2 (202 aa).

The first 20 residues, 1–20, serve as a signal peptide directing secretion; sequence MKYFLWSAVTIFAIVNVVGA. A propeptide spanning residues 21–87 is cleaved from the precursor; the sequence is KNSDFDPRCL…SFCQVEEDFD (67 aa). 3 Kazal-like domains span residues 23–77, 85–140, and 148–202; these read SDFD…KTLM, DFDS…ICRN, and IDPK…KGEC. 5 cysteine pairs are disulfide-bonded: cysteine 29–cysteine 62, cysteine 33–cysteine 55, cysteine 91–cysteine 124, cysteine 95–cysteine 117, and cysteine 103–cysteine 138. Asparagine 140 carries N-linked (GlcNAc...) asparagine glycosylation. The propeptide occupies 142 to 202; sequence SFKSELIDPK…NWTLIRKGEC (61 aa). 3 cysteine pairs are disulfide-bonded: cysteine 154–cysteine 187, cysteine 158–cysteine 180, and cysteine 166–cysteine 202. Asparagine 193 carries N-linked (GlcNAc...) asparagine glycosylation.

In terms of tissue distribution, expressed by the venom gland.

It localises to the secreted. Functionally, may act as a serine protease inhibitor, since it possess the kazal serine protease inhibitor signature. The recombinant peptide does not produce toxic effects on insects. This is U-Kazal-Dg21.2 from Dolopus genitalis (Giant Australian assassin fly).